Reading from the N-terminus, the 144-residue chain is D-aminoacyl-tRNA deacylase (144 aa).

The short motif at 136-137 (GP) is the Gly-cisPro motif, important for rejection of L-amino acids element.

The protein belongs to the DTD family. Homodimer.

It is found in the cytoplasm. It catalyses the reaction glycyl-tRNA(Ala) + H2O = tRNA(Ala) + glycine + H(+). The enzyme catalyses a D-aminoacyl-tRNA + H2O = a tRNA + a D-alpha-amino acid + H(+). Its function is as follows. An aminoacyl-tRNA editing enzyme that deacylates mischarged D-aminoacyl-tRNAs. Also deacylates mischarged glycyl-tRNA(Ala), protecting cells against glycine mischarging by AlaRS. Acts via tRNA-based rather than protein-based catalysis; rejects L-amino acids rather than detecting D-amino acids in the active site. By recycling D-aminoacyl-tRNA to D-amino acids and free tRNA molecules, this enzyme counteracts the toxicity associated with the formation of D-aminoacyl-tRNA entities in vivo and helps enforce protein L-homochirality. This is D-aminoacyl-tRNA deacylase from Actinobacillus pleuropneumoniae serotype 5b (strain L20).